The primary structure comprises 140 residues: Profilin-2 (140 aa).

Ala2 is modified (N-acetylalanine).

It belongs to the profilin family. In terms of assembly, occurs in many kinds of cells as a complex with monomeric actin in a 1:1 ratio. Interacts with PFN2. Interacts with ACTMAP (via N-terminus); the interaction may facilitate efficient cleavage of the acetylated N-terminus of immature actin by ACTMAP.

It is found in the cytoplasm. It localises to the cytoskeleton. In terms of biological role, binds to actin and affects the structure of the cytoskeleton. At high concentrations, profilin prevents the polymerization of actin, whereas it enhances it at low concentrations. By binding to PIP2, it inhibits the formation of IP3 and DG. The sequence is that of Profilin-2 (PFN2) from Bos taurus (Bovine).